Here is a 232-residue protein sequence, read N- to C-terminus: LOB domain-containing protein 11 (232 aa).

The segment at 1–50 is disordered; sequence MLKMEINGGVATPTASAVAKVTETTTPVNSPSPTSSPPPPPSPQQPPQPP. A compositionally biased stretch (pro residues) spans 34–50; it reads TSSPPPPPSPQQPPQPP. Residues 54 to 155 form the LOB domain; the sequence is SPCAACKILR…AQLAKTQVEL (102 aa). Residues 181–218 form a disordered region; that stretch reads EQGQQKMSFESSFESGDEFISSPDEESNDLGFLEDNNN. Low complexity predominate over residues 188-202; that stretch reads SFESSFESGDEFISS.

Belongs to the LOB domain-containing protein family. As to expression, expressed in young shoots, stems, leaves and flowers.

The protein is LOB domain-containing protein 11 (LBD11) of Arabidopsis thaliana (Mouse-ear cress).